The following is a 229-amino-acid chain: 2-phytyl-1,4-naphtoquinone methyltransferase (229 aa).

It belongs to the class I-like SAM-binding methyltransferase superfamily. MenG/UbiE family.

It carries out the reaction demethylphylloquinol + S-adenosyl-L-methionine = phylloquinol + S-adenosyl-L-homocysteine + H(+). It functions in the pathway cofactor biosynthesis; phylloquinone biosynthesis. Its function is as follows. Methyltransferase required for the conversion of 2-phytyl-1,4-beta-naphthoquinol to phylloquinol. The polypeptide is 2-phytyl-1,4-naphtoquinone methyltransferase (Trichormus variabilis (strain ATCC 29413 / PCC 7937) (Anabaena variabilis)).